A 190-amino-acid chain; its full sequence is Xanthine phosphoribosyltransferase (190 aa).

Xanthine-binding residues include Leu-20 and Asn-27. 128–132 contacts 5-phospho-alpha-D-ribose 1-diphosphate; it reads ANGEA. Lys-156 is a xanthine binding site.

This sequence belongs to the purine/pyrimidine phosphoribosyltransferase family. Xpt subfamily. Homodimer.

It is found in the cytoplasm. The enzyme catalyses XMP + diphosphate = xanthine + 5-phospho-alpha-D-ribose 1-diphosphate. It functions in the pathway purine metabolism; XMP biosynthesis via salvage pathway; XMP from xanthine: step 1/1. Functionally, converts the preformed base xanthine, a product of nucleic acid breakdown, to xanthosine 5'-monophosphate (XMP), so it can be reused for RNA or DNA synthesis. The chain is Xanthine phosphoribosyltransferase from Clostridium botulinum (strain Eklund 17B / Type B).